The sequence spans 624 residues: tRNA uridine 5-carboxymethylaminomethyl modification enzyme MnmG (624 aa).

FAD is bound by residues glycine 13 to glycine 18, valine 125, and serine 180. Position 272–286 (glycine 272–phenylalanine 286) interacts with NAD(+). Residue glutamine 369 coordinates FAD.

Belongs to the MnmG family. Homodimer. Heterotetramer of two MnmE and two MnmG subunits. Requires FAD as cofactor.

The protein localises to the cytoplasm. NAD-binding protein involved in the addition of a carboxymethylaminomethyl (cmnm) group at the wobble position (U34) of certain tRNAs, forming tRNA-cmnm(5)s(2)U34. This Thermodesulfovibrio yellowstonii (strain ATCC 51303 / DSM 11347 / YP87) protein is tRNA uridine 5-carboxymethylaminomethyl modification enzyme MnmG.